Consider the following 1063-residue polypeptide: MASTTPITMEDLQKALEAQSRALRAELAAGASQSRRPRPPRQRDSSTSGDDSGRDSGGPRRRRGNRGRGQRRDWSRAPPPPEERQETRSQTPAPKPSRAPPQQPQPPRMQTGRGGSAPRPELGPPTNPFQAAVARGLRPPLHDPDTEAPTEACVTSWLWSEGEGAVFYRVDLHFTNLGTPPLDEDGRWDPALMYNPCGPEPPAHVVRAYNQPAGDVRGVWGKGERTYAEQDFRVGGTRWHRLLRMPVRGLDGDSAPLPPHTTERIETRSARHPWRIRFGAPQAFLAGLLLATVAVGTARAGLQPRADMAAPPTLPQPPCAHGQHYGHHHHQLPFLGHDGHHGGTLRVGQHYRNASDVLPGHWLQGGWGCYNLSDWHQGTHVCHTKHMDFWCVEHDRPPPATPTPLTTAANSTTAATPATAPAPCHAGLNDSCGGFLSGCGPMRLRHGADTRCGRLICGLSTTAQYPPTRFGCAMRWGLPPWELVVLTARPEDGWTCRGVPAHPGARCPELVSPMGRATCSPASALWLATANALSLDHALAAFVLLVPWVLIFMVCRRACRRRGAAAALTAVVLQGYNPPAYGEEAFTYLCTAPGCATQAPVPVRLAGVRFESKIVDGGCFAPWDLEATGACICEIPTDVSCEGLGAWVPAAPCARIWNGTQRACTFWAVNAYSSGGYAQLASYFNPGGSYYKQYHPTACEVEPAFGHSDAACWGFPTDTVMSVFALASYVQHPHKTVRVKFHTETRTVWQLSVAGVSCNVTTEHPFCNTPHGQLEVQVPPDPGDLVEYIMNYTGNQQSRWGLGSPNCHGPDWASPVCQRHSPDCSRLVGATPERPRLRLVDADDPLLRTAPGPGEVWVTPVIGSQARKCGLHIRAGPYGHATVEMPEWIHAHTTSDPWHPPGPLGLKFKTVRPVALPRTLAPPRNVRVTGCYQCGTPALVEGLAPGGGNCHLTVNGEDLGAVPPGKFVTAALLNTPPPYQVSCGGESDRATARVIDPAAQSFTGVVYGTHTTAVSETRQTWAEWAAAHWWQLTLGAICALPLAGLLACCAKCLYYLRGAIAPR.

The tract at residues 1–131 (MASTTPITME…LGPPTNPFQA (131 aa)) is disordered. The tract at residues 30 to 69 (GASQSRRPRPPRQRDSSTSGDDSGRDSGGPRRRRGNRGRG) is human C1QBP/SF2P32-binding. Residue serine 46 is modified to Phosphoserine; by host. Residues 59–69 (PRRRRGNRGRG) show a composition bias toward basic residues. Residues 70-87 (QRRDWSRAPPPPEERQET) show a composition bias toward basic and acidic residues. The segment covering 93–107 (APKPSRAPPQQPQPP) has biased composition (pro residues). An intrachain disulfide couples cysteine 153 to cysteine 197. The tract at residues 279 to 300 (GAPQAFLAGLLLATVAVGTARA) is functions as E2 signal peptide. Residues 301–534 (GLQPRADMAA…LWLATANALS (234 aa)) are Extracellular-facing. N-linked (GlcNAc...) asparagine; by host glycans are attached at residues asparagine 353, asparagine 371, asparagine 410, and asparagine 429. A helical membrane pass occupies residues 535 to 555 (LDHALAAFVLLVPWVLIFMVC). Residues 556–582 (RRACRRRGAAAALTAVVLQGYNPPAYG) lie on the Cytoplasmic side of the membrane. The tract at residues 563–582 (GAAAALTAVVLQGYNPPAYG) is functions as E1 signal peptide. Topologically, residues 583-1028 (EEAFTYLCTA…QTWAEWAAAH (446 aa)) are extracellular. 8 disulfides stabilise this stretch: cysteine 590/cysteine 595, cysteine 619/cysteine 824, cysteine 641/cysteine 653, cysteine 699/cysteine 712, cysteine 758/cysteine 767, cysteine 807/cysteine 817, cysteine 931/cysteine 934, and cysteine 950/cysteine 983. Residue asparagine 658 is glycosylated (N-linked (GlcNAc...) asparagine; by host). Ca(2+) contacts are provided by asparagine 670 and alanine 671. Residues aspartate 718 and threonine 719 each contribute to the Ca(2+) site. Residues asparagine 759 and asparagine 791 are each glycosylated (N-linked (GlcNAc...) asparagine; by host). Residues threonine 1011 and threonine 1012 are each glycosylated (O-linked (GalNAc...) threonine; by host). A helical membrane pass occupies residues 1029-1049 (WWQLTLGAICALPLAGLLACC). Topologically, residues 1050–1063 (AKCLYYLRGAIAPR) are extracellular.

Homodimer; further assembles into homooligomer. Interacts with human C1QBP. Interacts (via N-terminus) with protease/methyltransferase p150. As to quaternary structure, heterodimer with spike glycoprotein E2. In terms of assembly, heterodimer with spike glycoprotein E1. Structural polyprotein: Specific enzymatic cleavages in vivo yield mature proteins. Two signal peptidase-mediated cleavages within the polyprotein produce the structural proteins capsid, E2, and E1. The E2 signal peptide remains attached to the C-terminus of the capsid protein after cleavage by the signal peptidase. Another signal peptide at E2 C-terminus directs E1 to the ER, with a similar mechanism. In terms of processing, contains three N-linked oligosaccharides. Post-translationally, capsid is phosphorylated on Ser-46 by host. This phosphorylation negatively regulates capsid protein RNA-binding activity. Dephosphorylated by human PP1A.

The protein localises to the virion. The protein resides in the host cytoplasm. Its subcellular location is the host mitochondrion. It localises to the virion membrane. It is found in the host Golgi apparatus membrane. In terms of biological role, capsid protein interacts with genomic RNA and assembles into icosahedric core particles 65-70 nm in diameter. The resulting nucleocapsid eventually associates with the cytoplasmic domain of E2 at the cell membrane, leading to budding and formation of mature virions from host Golgi membranes. Phosphorylation negatively regulates RNA-binding activity, possibly delaying virion assembly during the viral replication phase. Capsid protein dimerizes and becomes disulfide-linked in the virion. Modulates genomic RNA replication. Modulates subgenomic RNA synthesis by interacting with human C1QBP/SF2P32. Induces both perinuclear clustering of mitochondria and the formation of electron-dense intermitochondrial plaques, both hallmarks of rubella virus infected cells. Induces apoptosis when expressed in transfected cells. Its function is as follows. Responsible for viral attachment to target host cell, by binding to the cell receptor. Its transport to the plasma membrane depends on interaction with E1 protein. The surface glycoproteins display an irregular helical organization and a pseudo-tetrameric inner nucleocapsid arrangement. Functionally, class II viral fusion protein. Fusion activity is inactive as long as E1 is bound to E2 in mature virion. After virus attachment to target cell and clathrin-mediated endocytosis, acidification of the endosome would induce dissociation of E1/E2 heterodimer and concomitant trimerization of the E1 subunits. This E1 homotrimer is fusion active, and promotes release of viral nucleocapsid in cytoplasm after endosome and viral membrane fusion. The cytoplasmic tail of spike glycoprotein E1 modulates virus release. The surface glycoproteins display an irregular helical organization and a pseudo-tetrameric inner nucleocapsid arrangement. This Rubella virus (strain Therien) (RUBV) protein is Structural polyprotein.